Here is a 37-residue protein sequence, read N- to C-terminus: Protein 6.3 (37 aa).

This is Protein 6.3 from Escherichia phage T7 (Bacteriophage T7).